The sequence spans 464 residues: MSLQFSNGSRHVCLRSGAGSVRPLNGGAGFAGSSACGGSVAGSEFSCALGGGLGSVPGGSHAGGALGNAACIGFAGSEGGLLSGNEKVTMQNLNDRLASYLDNVRALEEANAELERKIKGWYEKYGPGSCRGLDHDYSRYHLTIEDLKNKIISSTTTNANVILQIDNARLAADDFRLKYENELTLHQNVEADINGLRRVLDELTLCRTDQELQYESLSEEMTYLKKNHEEEMKALQCAAGGNVNVEMNAAPGVDLAVLLNNMRAEYEALAEQNRKDAEAWFNEKSASLQQQISHDSGAATFARSQLTEMRRTLQTLEIQLQSLMATKHSLECSLTETESNYCTQLAQIQAQIGALEEQLHQVRTETEGQKLEYEHLLDVKVHLEKEIETYCRLIDGDGNSCSKSKGFGSGSPGNSSKDLSKTTLVKTVVEELDQRGKVLSSRIHSIEEKTSKMTNGKTEQRVPF.

The head stretch occupies residues 1 to 85 (MSLQFSNGSR…GSEGGLLSGN (85 aa)). The segment at 86-121 (EKVTMQNLNDRLASYLDNVRALEEANAELERKIKGW) is coil 1A. The 316-residue stretch at 86-401 (EKVTMQNLND…RLIDGDGNSC (316 aa)) folds into the IF rod domain. The linker 1 stretch occupies residues 122-143 (YEKYGPGSCRGLDHDYSRYHLT). The segment at 144–235 (IEDLKNKIIS…KNHEEEMKAL (92 aa)) is coil 1B. The segment at 236-258 (QCAAGGNVNVEMNAAPGVDLAVL) is linker 12. Residues 259–397 (LNNMRAEYEA…ETYCRLIDGD (139 aa)) are coil 2. The interval 398–464 (GNSCSKSKGF…NGKTEQRVPF (67 aa)) is tail. The disordered stretch occupies residues 443-464 (IHSIEEKTSKMTNGKTEQRVPF).

It belongs to the intermediate filament family. In terms of assembly, heterotetramer of two type I and two type II keratins. Strongly expressed in skin and scalp, and weak expression observed in thymus. In the hair follicle, expressed in Henle layer, Huxley layer and in the irs cuticle. Expression extends from the bulb region up to the point of differentiation into the three layers. Also present in the medulla of beard hair (at protein level).

The protein localises to the cytoplasm. In terms of biological role, essential for the proper assembly of types I and II keratin protein complexes and the formation of keratin intermediate filaments in the inner root sheath (irs). The protein is Keratin, type I cytoskeletal 28 of Homo sapiens (Human).